The sequence spans 194 residues: Cysteine and glycine-rich protein 3 (194 aa).

An interaction with TCAP region spans residues 1-5; that stretch reads MPNWG. The LIM zinc-binding 1 domain maps to 10–61; the sequence is CGACEKTVYHAEEIQCNGRSFHKTCFHCMACRKALDSTTVAAHESEIYCKVC. The Nuclear localization signal motif lies at 64–69; sequence RRYGPK. Residues 94–106 are interaction with CLF2; it reads QSPKQARSATTSS. Residues Ser95 and Ser153 each carry the phosphoserine modification. One can recognise an LIM zinc-binding 2 domain in the interval 120–171; sequence CPRCGKSVYAAEKVMGGGKPWHKTCFRCAICGKSLESTNVTDKDGELYCKVC.

In terms of assembly, self-associates. Oligomeric in the cytoplasm and monomeric in the nucleus. Homooligomers preferentially form along the actin cytoskeleton. Interacts with TCAP, LDHD, MYOD1, MYOG, ACTN2, NRAP, MYF6. Interacts (via N-terminus) with GLRX3 (via C-terminus) and PPP3CA; GLRX3 and calcineurin compete for interaction with CSRP3. Interacts with CFL2; the stoichiometry influences F-actin depolymerization and possibly two molecules of CFL2 can interact with one molecule of CSRP3 resulting in the highest functional impact; the interaction is stronger with phosphorylated CFL2.

The protein localises to the nucleus. Its subcellular location is the cytoplasm. The protein resides in the cytoskeleton. It localises to the myofibril. It is found in the sarcomere. The protein localises to the z line. In terms of biological role, positive regulator of myogenesis. Acts as a cofactor for myogenic bHLH transcription factors such as MYOD1, and probably MYOG and MYF6. Enhances the DNA-binding activity of the MYOD1:TCF3 isoform E47 complex and may promote formation of a functional MYOD1:TCF3 isoform E47:MEF2A complex involved in myogenesis. Plays a crucial and specific role in the organization of cytosolic structures in cardiomyocytes. Could play a role in mechanical stretch sensing. May be a scaffold protein that promotes the assembly of interacting proteins at Z-line structures. It is essential for calcineurin anchorage to the Z line. Required for stress-induced calcineurin-NFAT activation. The role in regulation of cytoskeleton dynamics by association with CFL2 is reported conflictingly. Proposed to contribute to the maintenance of muscle cell integrity through an actin-based mechanism. Can directly bind to actin filaments, cross-link actin filaments into bundles without polarity selectivity and protect them from dilution- and cofilin-mediated depolymerization; the function seems to involve its self-association. In vitro can inhibit PKC/PRKCA activity. Proposed to be involved in cardiac stress signaling by down-regulating excessive PKC/PRKCA signaling. In Bos taurus (Bovine), this protein is Cysteine and glycine-rich protein 3 (CSRP3).